The following is a 355-amino-acid chain: 3-isopropylmalate dehydrogenase (355 aa).

Substrate is bound by residues Arg-90, Arg-100, Arg-128, and Asp-222. Residues Asp-222, Asp-246, and Asp-250 each contribute to the Mg(2+) site. Gly-280–Asn-292 serves as a coordination point for NAD(+).

This sequence belongs to the isocitrate and isopropylmalate dehydrogenases family. LeuB type 1 subfamily. In terms of assembly, homodimer. It depends on Mg(2+) as a cofactor. Mn(2+) is required as a cofactor.

The protein localises to the cytoplasm. It carries out the reaction (2R,3S)-3-isopropylmalate + NAD(+) = 4-methyl-2-oxopentanoate + CO2 + NADH. It participates in amino-acid biosynthesis; L-leucine biosynthesis; L-leucine from 3-methyl-2-oxobutanoate: step 3/4. In terms of biological role, catalyzes the oxidation of 3-carboxy-2-hydroxy-4-methylpentanoate (3-isopropylmalate) to 3-carboxy-4-methyl-2-oxopentanoate. The product decarboxylates to 4-methyl-2 oxopentanoate. This chain is 3-isopropylmalate dehydrogenase, found in Burkholderia mallei (strain ATCC 23344).